Reading from the N-terminus, the 351-residue chain is Penicillolysin (351 aa).

An N-terminal signal peptide occupies residues 1 to 19 (MRFTTLSTAFLALAQNVYA). Positions 20 to 174 (FPIESDLSAL…TKALKPLDRR (155 aa)) are excised as a propeptide. N-linked (GlcNAc...) asparagine glycosylation is found at Asn-52 and Asn-181. Residue His-302 coordinates Zn(2+). The active site involves Glu-303. 2 residues coordinate Zn(2+): His-306 and Asp-317.

This sequence belongs to the peptidase M35 family. Zn(2+) serves as cofactor.

The catalysed reaction is Preferential cleavage of bonds with hydrophobic residues in P1'. Also 3-Asn-|-Gln-4 and 8-Gly-|-Ser-9 bonds in insulin B chain.. The chain is Penicillolysin (plnC) from Penicillium citrinum.